The following is a 271-amino-acid chain: Large ribosomal subunit protein uL2 (271 aa).

Residues 221 to 271 (RGVAMNPVDHPMGGGEGKSSGGHPRNRNGIPSNGFKTRNKKKITNKYIIKK) form a disordered region. Over residues 257–271 (TRNKKKITNKYIIKK) the composition is skewed to basic residues.

The protein belongs to the universal ribosomal protein uL2 family. As to quaternary structure, part of the 50S ribosomal subunit. Forms a bridge to the 30S subunit in the 70S ribosome.

One of the primary rRNA binding proteins. Required for association of the 30S and 50S subunits to form the 70S ribosome, for tRNA binding and peptide bond formation. It has been suggested to have peptidyltransferase activity; this is somewhat controversial. Makes several contacts with the 16S rRNA in the 70S ribosome. This is Large ribosomal subunit protein uL2 from Karelsulcia muelleri (strain GWSS) (Sulcia muelleri).